Here is a 136-residue protein sequence, read N- to C-terminus: Large ribosomal subunit protein uL22 (136 aa).

Belongs to the universal ribosomal protein uL22 family. In terms of assembly, part of the 50S ribosomal subunit.

Its function is as follows. This protein binds specifically to 23S rRNA; its binding is stimulated by other ribosomal proteins, e.g. L4, L17, and L20. It is important during the early stages of 50S assembly. It makes multiple contacts with different domains of the 23S rRNA in the assembled 50S subunit and ribosome. Functionally, the globular domain of the protein is located near the polypeptide exit tunnel on the outside of the subunit, while an extended beta-hairpin is found that lines the wall of the exit tunnel in the center of the 70S ribosome. The sequence is that of Large ribosomal subunit protein uL22 from Bacteroides thetaiotaomicron (strain ATCC 29148 / DSM 2079 / JCM 5827 / CCUG 10774 / NCTC 10582 / VPI-5482 / E50).